A 1392-amino-acid chain; its full sequence is DNA-directed RNA polymerase subunit beta'' (1392 aa).

Residues Cys224, Cys295, Cys302, and Cys305 each contribute to the Zn(2+) site.

The protein belongs to the RNA polymerase beta' chain family. RpoC2 subfamily. As to quaternary structure, in plastids the minimal PEP RNA polymerase catalytic core is composed of four subunits: alpha, beta, beta', and beta''. When a (nuclear-encoded) sigma factor is associated with the core the holoenzyme is formed, which can initiate transcription. The cofactor is Zn(2+).

It is found in the plastid. It localises to the chloroplast. It catalyses the reaction RNA(n) + a ribonucleoside 5'-triphosphate = RNA(n+1) + diphosphate. In terms of biological role, DNA-dependent RNA polymerase catalyzes the transcription of DNA into RNA using the four ribonucleoside triphosphates as substrates. This is DNA-directed RNA polymerase subunit beta'' from Solanum lycopersicum (Tomato).